Reading from the N-terminus, the 376-residue chain is MFVTAPEIQWIRDDASLAQQCREWRTQPYLALDTEFMRVDTFYPAAGLVQVGDGRREWLIDPLLVRDWGPFAELLEDPRVVKVLHACSEDLEVFLRLTGSLPVPLFDTQLAAAYLGMAHSMGYSKLVKEVLDIDLPKDETRSDWLQRPLTEMQMRYAADDVQHLAQVYLALDARLSEEKRAWLLEDGAELVANLCRESDPREAYREVKLGWRLRPQQLAVLRELCAWREEQARLRNRPRNHVLRERTLWPLARLLPKNKTDLAAIEDMHPRTVRQDGDFLIELIAEAARLPQSEWPEALPEPLPPEVTPLLKSLRAIGQREAETLGMAPELMLRKKILEALLKSGYPHGPYELPDSLRGWRRERMGQALLNALESA.

The 3'-5' exonuclease domain maps to 8–176 (IQWIRDDASL…VYLALDARLS (169 aa)). In terms of domain architecture, HRDC spans 214–294 (RPQQLAVLRE…AEAARLPQSE (81 aa)).

Belongs to the RNase D family. It depends on a divalent metal cation as a cofactor.

It is found in the cytoplasm. The catalysed reaction is Exonucleolytic cleavage that removes extra residues from the 3'-terminus of tRNA to produce 5'-mononucleotides.. Functionally, exonuclease involved in the 3' processing of various precursor tRNAs. Initiates hydrolysis at the 3'-terminus of an RNA molecule and releases 5'-mononucleotides. In Pseudomonas paraeruginosa (strain DSM 24068 / PA7) (Pseudomonas aeruginosa (strain PA7)), this protein is Ribonuclease D.